A 474-amino-acid polypeptide reads, in one-letter code: Glutamate--tRNA ligase (474 aa).

Residues 9–19 carry the 'HIGH' region motif; it reads PSPTGYLHVGG. The 'KMSKS' region motif lies at 240 to 244; that stretch reads KLSKR. Residue lysine 243 coordinates ATP.

It belongs to the class-I aminoacyl-tRNA synthetase family. Glutamate--tRNA ligase type 1 subfamily. In terms of assembly, monomer.

Its subcellular location is the cytoplasm. The catalysed reaction is tRNA(Glu) + L-glutamate + ATP = L-glutamyl-tRNA(Glu) + AMP + diphosphate. Functionally, catalyzes the attachment of glutamate to tRNA(Glu) in a two-step reaction: glutamate is first activated by ATP to form Glu-AMP and then transferred to the acceptor end of tRNA(Glu). In Aliivibrio fischeri (strain MJ11) (Vibrio fischeri), this protein is Glutamate--tRNA ligase.